The chain runs to 414 residues: MIVKIYPSKISGIIKAPQSKSLAIRLIFLSLFTRVYLHNLVLSEDVIDAIKSVRALGVKVKNNSEFIPPEKLEIKERFIKLKGSATTLRMLIPILAAIGGEVTIDADESLRRRPLNRIVQALSNYGISFSSYSLPLTITGKLSSNEIKISGDESSQYISGLIYALHILNGGSIEILPPISSKSYILLTIDLFKRFGSDVKFYGSKIHVNPNNLVEFQGEVAGDYGLASFYALSALVSGGGITITNLWEPKEYFGDHSIVKIFSEMGASSEYKDGRWFVKAKDKYSPIKIDIDDAPDLAMTIAGLSAIAEGTSEIIGIERLRIKESDRIESIRKILGLYGVGSEVKYNSILIFGINKGMLNSPVTDCLNDHRVAMMSSALALVNGGVITSAECVGKSNPNYWQDLLSLNAKISIE.

Positions 20, 21, and 25 each coordinate 3-phosphoshikimate. Residue Lys20 coordinates phosphoenolpyruvate. Phosphoenolpyruvate is bound at residue Arg113. Ser154, Ser155, Gln156, Ser181, Asp296, and Lys323 together coordinate 3-phosphoshikimate. Residue Gln156 participates in phosphoenolpyruvate binding. The active-site Proton acceptor is the Asp296. Residues Arg327, Arg371, and Lys395 each contribute to the phosphoenolpyruvate site.

Belongs to the EPSP synthase family. In terms of assembly, monomer.

The protein resides in the cytoplasm. It carries out the reaction 3-phosphoshikimate + phosphoenolpyruvate = 5-O-(1-carboxyvinyl)-3-phosphoshikimate + phosphate. Its pathway is metabolic intermediate biosynthesis; chorismate biosynthesis. Functionally, catalyzes the transfer of the enolpyruvyl moiety of phosphoenolpyruvate (PEP) to the 5-hydroxyl of shikimate-3-phosphate (S3P) to produce enolpyruvyl shikimate-3-phosphate and inorganic phosphate. The sequence is that of 3-phosphoshikimate 1-carboxyvinyltransferase from Saccharolobus solfataricus (strain ATCC 35092 / DSM 1617 / JCM 11322 / P2) (Sulfolobus solfataricus).